A 102-amino-acid chain; its full sequence is Neuropeptide F (102 aa).

The signal sequence occupies residues 1 to 26; it reads MCQTMRCILVACVALALLAAGCRVEA. Residues 27–32 constitute a propeptide that is removed on maturation; it reads SNSRPP. Position 62 is a phenylalanine amide (Phe62). Positions 66–102 are excised as a propeptide; that stretch reads GSLMDILRNHEMDNINLGKNANNGGEFARGFNEEEIF.

Belongs to the NPY family. As to expression, expressed in midgut, brain lobes and ventral nerve cord of larvae. Predominantly expressed in two pairs of protocerebral neurons in the larval CNS (at protein level). Intense expression is also seen in the fan-shaped body of the central complex and two lateral areas of the lower part of the central brain that appear to harbor the giant commissural interneurons of the giant fiber pathway (at protein level). Upon glucose feeding, two additional dNPFergic neurons are consistently detected on the ventromedial surface of the subesophageal ganglion (SEG) of third instars larvae. Expressed in a subset of sugar-responsive PAIN neurons in the thoracic body but is absent from other peripheral PAIN neurons.

It localises to the secreted. Its function is as follows. Integral part of the sensory system that mediates food signaling, providing the neural basis for the regulation of food response; coordinates larval foraging and social behavior changes during development. Required in dopaminergic (DA) neurons that innervate the mushroom body for satiety to suppress appetitive memory performance; a key factor in the internal state of hunger in the brain. NPF neurons coordinately modulate diverse sensory and motor neurons important for feeding, flight, and locomotion. NPF/NPFR pathway exerts its suppressive effect on larval aversion to diverse stressful stimuli (chemical stress and noxious heat) through attenuation of TRP channel-induced neuronal excitation. NPF neural signaling system plays a physiological role in acute modulation of alcohol sensitivity in adults, rather than a general response to intoxication by sedative agents. Activation and inhibition of the NPF system reduces and enhances ethanol preference, respectively. Sexual experience, the NPF system activity and ethanol consumption are all linked; sexual deprivation is a major contributor to enhanced ethanol preference. The protein is Neuropeptide F (NPF) of Drosophila melanogaster (Fruit fly).